The following is a 459-amino-acid chain: MPPGVAVCFSSLFIRLVCMAFLTSSDKALWHLALPMIFSNITVPLLGLVDTAVIGHLDSPVYLGGVAVGATATSFLFMLLLFLRMSTTGLTAQAYGAKNPQALARTLVQPLLLALGAGALIALLRTPIIDLALHIVGGSEAVLEQARRFLEIRWLSAPASLANLVLLGWLLGVQYARAPVILLVVGNILNIVLDVWLVMGLHMNVQGAALATVIAEYATLLIGLLMVRKILKLRGISGEMLKTAWRGNFRRLLALNRDIMLRSLLLQLCFGAITVLGARLGSDIIAVNAVLMTLLTFTAYALDGFAYAVEAHSGQAYGARDGSQLLDVWRAACRQSGIVALLFSVVYLLAGEHIIALLTSLTQIQQLADRYLIWQVILPVVGVWCYLLDGMFIGATRATEMRNSMAVAAAGFALTLLTLPWLGNHALWLALTVFLALRGLSLAAIWRRHWRNGTWFAAT.

12 helical membrane-spanning segments follow: residues 2–22 (PPGV…MAFL), 29–49 (LWHL…LGLV), 63–83 (LGGV…LLFL), 111–131 (LLLA…IIDL), 154–174 (WLSA…LGVQ), 180–200 (VILL…LVMG), 207–227 (GAAL…LLMV), 265–285 (LLQL…SDII), 289–309 (AVLM…AYAV), 338–358 (IVAL…IALL), 373–393 (IWQV…GMFI), and 416–436 (LLTL…VFLA).

Belongs to the multi antimicrobial extrusion (MATE) (TC 2.A.66.1) family.

The protein resides in the cell inner membrane. This chain is DNA damage-inducible protein F (dinF), found in Escherichia coli (strain K12).